We begin with the raw amino-acid sequence, 599 residues long: MPSSLPGSQVPHPTLDAVDLVEKTLRNEGTSSSAPVLEEGDTDPWTLPQLKDTSQPWKELRVAGRLRRVAGSVLKACGLLGSLYFFICSLDVLSSAFQLLGSKVAGDIFKDNVVLSNPVAGLVIGVLVTALVQSSSTSSSIVVSMVAAKLLTVRVSVPIIMGVNVGTSITSTLVSMAQSGDRDEFQRAFSGSAVHGIFNWLTVLVLLPLESATALLERLSELALGAASLTPRAQAPDILKVLTKPLTHLIVQLDSDMIMSSATGNATNSSLIKHWCGTTGQPTQENSSCGAFGPCTEKNSTAPADRLPCRHLFAGTELTDLAVGCILLAGSLLVLCGCLVLIVKLLNSVLRGRVAQVVRTVINADFPFPLGWLGGYLAVLAGAGLTFALQSSSVFTAAVVPLMGVGVISLDRAYPLLLGSNIGTTTTALLAALASPADRMLSALQVALIHFFFNLAGILLWYLVPALRLPIPLARHFGVVTARYRWVAGVYLLLGFLLLPLAAFGLSLAGGMELAAVGGPLVGLVLLVILVTVLQRRRPAWLPVRLRSWAWLPVWLHSLEPWDRLVTRCCPCNVCSPPKATTKEAYCYENPEILASQQL.

Topologically, residues 1 to 76 (MPSSLPGSQV…RRVAGSVLKA (76 aa)) are cytoplasmic. Position 4 is a phosphoserine (S4). The chain crosses the membrane as a helical span at residues 77–97 (CGLLGSLYFFICSLDVLSSAF). Over 98 to 111 (QLLGSKVAGDIFKD) the chain is Extracellular. Residues 112–132 (NVVLSNPVAGLVIGVLVTALV) form a helical membrane-spanning segment. Over 133–188 (QSSSTSSSIVVSMVAAKLLTVRVSVPIIMGVNVGTSITSTLVSMAQSGDRDEFQRA) the chain is Cytoplasmic. A helical transmembrane segment spans residues 189–209 (FSGSAVHGIFNWLTVLVLLPL). The Extracellular portion of the chain corresponds to 210-322 (ESATALLERL…FAGTELTDLA (113 aa)). N-linked (GlcNAc...) asparagine glycans are attached at residues N265, N268, N286, and N299. C276 and C309 are oxidised to a cystine. A helical membrane pass occupies residues 323–343 (VGCILLAGSLLVLCGCLVLIV). Residues 344 to 367 (KLLNSVLRGRVAQVVRTVINADFP) are Cytoplasmic-facing. A helical transmembrane segment spans residues 368–388 (FPLGWLGGYLAVLAGAGLTFA). At 389–445 (LQSSSVFTAAVVPLMGVGVISLDRAYPLLLGSNIGTTTTALLAALASPADRMLSALQ) the chain is on the extracellular side. The chain crosses the membrane as a helical span at residues 446 to 466 (VALIHFFFNLAGILLWYLVPA). Over 467-485 (LRLPIPLARHFGVVTARYR) the chain is Cytoplasmic. Residues 486–506 (WVAGVYLLLGFLLLPLAAFGL) traverse the membrane as a helical segment. The Extracellular segment spans residues 507–510 (SLAG). A helical membrane pass occupies residues 511 to 531 (GMELAAVGGPLVGLVLLVILV). Residues 532–599 (TVLQRRRPAW…NPEILASQQL (68 aa)) lie on the Cytoplasmic side of the membrane.

It belongs to the SLC34A transporter family. Expressed only in the kidney.

It localises to the apical cell membrane. It carries out the reaction 2 Na(+)(out) + phosphate(out) = 2 Na(+)(in) + phosphate(in). Involved in actively transporting phosphate into cells via Na(+) cotransport in the renal brush border membrane. The cotransport has a Na(+):Pi stoichiometry of 2:1 and is electroneutral. In Homo sapiens (Human), this protein is Sodium-dependent phosphate transport protein 2C (SLC34A3).